The sequence spans 456 residues: RuvB-like 1 (456 aa).

70–77 is a binding site for ATP; sequence GPPGTGKT.

It belongs to the RuvB family. In terms of assembly, forms homohexameric rings. Can form a dodecamer with ruvbl2 made of two stacked hexameric rings. Is a component of the RNA polymerase II holoenzyme complex. Component of the chromatin-remodeling Ino80 complex. Component of some MLL1/MLL complex.

The protein localises to the nucleus. The protein resides in the dynein axonemal particle. It catalyses the reaction ATP + H2O = ADP + phosphate + H(+). Has single-stranded DNA-stimulated ATPase and ATP-dependent DNA helicase (3' to 5') activity suggesting a role in nuclear processes such as recombination and transcription. Proposed core component of the chromatin remodeling INO80 complex which exhibits DNA- and nucleosome-activated ATPase activity and catalyzes ATP-dependent nucleosome sliding. This Xenopus laevis (African clawed frog) protein is RuvB-like 1 (ruvbl1).